A 343-amino-acid chain; its full sequence is Armadillo repeat-containing protein 10 (343 aa).

The chain crosses the membrane as a helical span at residues 5–27 (RGAGWVAAGLLLGAGACYCIYRL). A disordered region spans residues 43–83 (SKSAGALEEGTSEGQLCGRSARPQTGGTWESQWSKTSQPED). At Ser45 the chain carries Phosphoserine. A Phosphothreonine modification is found at Glu50. Polar residues predominate over residues 64–82 (RPQTGGTWESQWSKTSQPE). Thr85 is subject to Phosphothreonine. One copy of the ARM repeat lies at 138–180 (GGIPIVANKINHSNQSIKEKALNALNNLSVNVENQIKIKIYIS).

As to quaternary structure, interacts with the DNA-binding domain of p53/TP53. Expressed in all tissues tested with higher expression in placenta, liver, kidney, heart and brain.

It is found in the endoplasmic reticulum membrane. It localises to the mitochondrion outer membrane. Its function is as follows. May play a role in cell survival and cell growth. May suppress the transcriptional activity of p53/TP53. This Homo sapiens (Human) protein is Armadillo repeat-containing protein 10 (ARMC10).